The following is an 841-amino-acid chain: Rhomboid-like protease 5 (841 aa).

Over residues 1–10 (MSSKGGSSRL) the composition is skewed to low complexity. Residues 1 to 289 (MSSKGGSSRL…GGDGGPRRHS (289 aa)) are disordered. A compositionally biased stretch (basic and acidic residues) spans 11–51 (GSKDLKKMTSRTERELRDSGRVRGEVERVEKRLRATAKVKE). Residues 95–132 (LRPASSSPRLASSSRPTESTLPSSSSRALQGASSSSSS) are compositionally biased toward low complexity. Composition is skewed to basic and acidic residues over residues 154-163 (LRQEKKRLPE), 209-230 (RTAE…RGSV), and 243-275 (SSHE…RSGD). Transmembrane regions (helical) follow at residues 323–343 (FLMI…ELVL), 464–484 (MFRV…LLNV), 492–512 (WILE…VGGV), 526–546 (VTVG…PFSI), 571–590 (FGNM…GGLI), and 673–693 (FAAA…LLVP). The active-site Nucleophile is serine 531. Histidine 585 is a catalytic residue.

Belongs to the peptidase S54 family.

Its subcellular location is the membrane. It carries out the reaction Cleaves type-1 transmembrane domains using a catalytic dyad composed of serine and histidine that are contributed by different transmembrane domains.. In terms of biological role, serine protease involved in intramembrane proteolysis. Cleaves microneme adhesins, such as MIC2. This step is essential for efficient invasion of host cells. Catalyzes intramembrane proteolysis of AMA1. The chain is Rhomboid-like protease 5 (ROM5) from Toxoplasma gondii.